Consider the following 128-residue polypeptide: 3-aminoacrylate deaminase RutC (128 aa).

Belongs to the RutC family. Homotrimer.

It catalyses the reaction (Z)-3-aminoacrylate + H2O + H(+) = 3-oxopropanoate + NH4(+). In terms of biological role, involved in pyrimidine catabolism. Catalyzes the deamination of 3-aminoacrylate to malonic semialdehyde, a reaction that can also occur spontaneously. RutC may facilitate the reaction and modulate the metabolic fitness, rather than catalyzing essential functions. The chain is 3-aminoacrylate deaminase RutC from Shigella flexneri serotype X (strain 2002017).